We begin with the raw amino-acid sequence, 348 residues long: Dihydroorotase (348 aa).

Zn(2+) is bound by residues His17 and His19. Substrate is bound by residues His19–Arg21 and Asn45. Residues Lys103, His140, and His178 each coordinate Zn(2+). At Lys103 the chain carries N6-carboxylysine. Residue His140 participates in substrate binding. Leu223 is a binding site for substrate. Zn(2+) is bound at residue Asp251. Residue Asp251 is part of the active site. Residues His255 and Ala267 each coordinate substrate.

It belongs to the metallo-dependent hydrolases superfamily. DHOase family. Class II DHOase subfamily. Homodimer. Requires Zn(2+) as cofactor.

The catalysed reaction is (S)-dihydroorotate + H2O = N-carbamoyl-L-aspartate + H(+). The protein operates within pyrimidine metabolism; UMP biosynthesis via de novo pathway; (S)-dihydroorotate from bicarbonate: step 3/3. Functionally, catalyzes the reversible cyclization of carbamoyl aspartate to dihydroorotate. The chain is Dihydroorotase from Escherichia coli (strain UTI89 / UPEC).